A 303-amino-acid chain; its full sequence is Pseudouridine-5'-phosphate glycosidase (303 aa).

The active-site Proton donor is the Glu26. Substrate contacts are provided by Lys87 and Val107. Asp139 contributes to the Mn(2+) binding site. 141-143 (SAD) lines the substrate pocket. The active-site Nucleophile is Lys160.

Belongs to the pseudouridine-5'-phosphate glycosidase family. As to quaternary structure, homotrimer. The cofactor is Mn(2+).

It catalyses the reaction D-ribose 5-phosphate + uracil = psi-UMP + H2O. In terms of biological role, catalyzes the reversible cleavage of pseudouridine 5'-phosphate (PsiMP) to ribose 5-phosphate and uracil. Functions biologically in the cleavage direction, as part of a pseudouridine degradation pathway. The polypeptide is Pseudouridine-5'-phosphate glycosidase (Saccharopolyspora erythraea (strain ATCC 11635 / DSM 40517 / JCM 4748 / NBRC 13426 / NCIMB 8594 / NRRL 2338)).